The following is a 523-amino-acid chain: Cyclin-dependent kinase 17 (523 aa).

Position 9 is a phosphoserine (Ser9). Positions 31–55 (IEESSSKDNEPIVKNGRPPTSHSMH) are disordered. 3 positions are modified to phosphoserine: Ser80, Ser92, and Ser105. The disordered stretch occupies residues 103–123 (MGSDGESDQASGTSSDEVQSP). The segment covering 110–123 (DQASGTSSDEVQSP) has biased composition (polar residues). Residues Ser137, Ser146, Ser165, and Ser180 each carry the phosphoserine modification. The Protein kinase domain maps to 192–473 (YIKLEKLGEG…AEEAMKHVYF (282 aa)). ATP-binding positions include 198–206 (LGEGTYATV) and Lys221. The active-site Proton acceptor is Asp313.

The protein belongs to the protein kinase superfamily. CMGC Ser/Thr protein kinase family. CDC2/CDKX subfamily. As to quaternary structure, found in a complex containing CABLES1, CDK16 and TDRD7. Interacts with TDRD7. As to expression, brain specific. Within the brain it is concentrated in the neuronal layers of the hippocampus and olfactory bulb, which mostly consist of post-mitotic neurons.

It catalyses the reaction L-seryl-[protein] + ATP = O-phospho-L-seryl-[protein] + ADP + H(+). The catalysed reaction is L-threonyl-[protein] + ATP = O-phospho-L-threonyl-[protein] + ADP + H(+). Functionally, may play a role in terminally differentiated neurons. Has a Ser/Thr-phosphorylating activity for histone H1. The protein is Cyclin-dependent kinase 17 (Cdk17) of Rattus norvegicus (Rat).